Here is an 800-residue protein sequence, read N- to C-terminus: DNA topoisomerase 4 subunit A (800 aa).

The 465-residue stretch at 31–495 (LPDVRDGLKP…EIEEIKIDKE (465 aa)) folds into the Topo IIA-type catalytic domain. Tyrosine 119 functions as the O-(5'-phospho-DNA)-tyrosine intermediate in the catalytic mechanism.

This sequence belongs to the type II topoisomerase GyrA/ParC subunit family. ParC type 2 subfamily. Heterotetramer composed of ParC and ParE.

It localises to the cell membrane. It carries out the reaction ATP-dependent breakage, passage and rejoining of double-stranded DNA.. In terms of biological role, topoisomerase IV is essential for chromosome segregation. It relaxes supercoiled DNA. Performs the decatenation events required during the replication of a circular DNA molecule. This is DNA topoisomerase 4 subunit A from Staphylococcus aureus.